Reading from the N-terminus, the 325-residue chain is D site-binding protein (325 aa).

Disordered stretches follow at residues Met-1–Leu-99, Gly-127–Glu-200, and Arg-229–Asp-255. Residues Gly-17–Leu-28 are compositionally biased toward gly residues. 2 stretches are compositionally biased toward low complexity: residues Leu-29–Thr-38 and Ala-57–Ala-80. Ser-86 carries the post-translational modification Phosphoserine. The span at Pro-129–Gly-153 shows a compositional bias: pro residues. Residues Cys-157 to Gly-167 show a composition bias toward low complexity. Residues Asp-255–Tyr-318 form the bZIP domain. Residues Lys-257 to Lys-279 form a basic motif region. The segment at Ile-283–Leu-297 is leucine-zipper.

The protein belongs to the bZIP family. PAR subfamily. Binds DNA as a homodimer or a heterodimer. Can form a heterodimer with TEF. Ubiquitously expressed. Expressed in the suprachiasmatic nuclei (SCN) and in most peripheral tissues, with a strong circadian rhythmicity.

Its subcellular location is the nucleus. This transcriptional activator recognizes and binds to the sequence 5'-RTTAYGTAAY-3' found in the promoter of genes such as albumin, CYP2A4 and CYP2A5. It is not essential for circadian rhythm generation, but modulates important clock output genes. May be a direct target for regulation by the circadian pacemaker component clock. May affect circadian period and sleep regulation. This Homo sapiens (Human) protein is D site-binding protein (DBP).